The primary structure comprises 224 residues: Processed variable antigen (224 aa).

17 consecutive repeat copies span residues 1 to 6 (ETGESK), 7 to 12 (ETGESK), 13 to 18 (ETGESK), 19 to 24 (ETGESK), 25 to 30 (ETGESK), 31 to 36 (ETGESK), 37 to 42 (ETGESK), 43 to 48 (ETGESK), 49 to 54 (ETGESK), 55 to 60 (ETGESK), 61 to 66 (ETGESK), 67 to 72 (ETGESK), 73 to 78 (ETGESK), 79 to 84 (ETGESK), 85 to 90 (ETGESK), 91 to 96 (ETGESK), and 97 to 102 (ETGESK). The tract at residues 1–102 (ETGESKETGE…GESKETGESK (102 aa)) is 17 X 6 AA tandem repeats of E-T-G-E-S-K. The span at 1 to 137 (ETGESKETGE…TEESKDREGN (137 aa)) shows a compositional bias: basic and acidic residues. The tract at residues 1–224 (ETGESKETGE…KKADNKKKKK (224 aa)) is disordered. Residues 144 to 153 (ENSENSNVTS) show a composition bias toward low complexity. Basic and acidic residues-rich tracts occupy residues 156–173 (EETK…EKLG) and 185–217 (EDPK…EKKA).

This is Processed variable antigen from Plasmodium falciparum.